The following is a 398-amino-acid chain: Cysteine protease ATG4A (398 aa).

Cys77 acts as the Nucleophile in catalysis. Residues Asp279 and His281 contribute to the active site. The LIR motif lies at 393-396 (FEIL).

Belongs to the peptidase C54 family. In terms of assembly, interacts with ATG9A; the interaction is direct.

It is found in the cytoplasm. It catalyses the reaction [protein]-C-terminal L-amino acid-glycyl-phosphatidylethanolamide + H2O = [protein]-C-terminal L-amino acid-glycine + a 1,2-diacyl-sn-glycero-3-phosphoethanolamine. With respect to regulation, inhibited by N-ethylmaleimide. Redox-regulated during autophagy since reducing conditions activate ATG4A whereas an oxidizing environment such as the presence of H(2)O(2) inhibits its activity. Cysteine protease that plays a key role in autophagy by mediating both proteolytic activation and delipidation of ATG8 family proteins. The protease activity is required for proteolytic activation of ATG8 family proteins: cleaves the C-terminal amino acid of ATG8 proteins to reveal a C-terminal glycine. Exposure of the glycine at the C-terminus is essential for ATG8 proteins conjugation to phosphatidylethanolamine (PE) and insertion to membranes, which is necessary for autophagy. Preferred substrate is GABARAPL2 followed by MAP1LC3A and GABARAP. Protease activity is also required to counteract formation of high-molecular weight conjugates of ATG8 proteins (ATG8ylation): acts as a deubiquitinating-like enzyme that removes ATG8 conjugated to other proteins, such as ATG3. In addition to the protease activity, also mediates delipidation of ATG8 family proteins. Catalyzes delipidation of PE-conjugated forms of ATG8 proteins during macroautophagy. Compared to ATG4B, the major protein for proteolytic activation of ATG8 proteins, shows weaker ability to cleave the C-terminal amino acid of ATG8 proteins, while it displays stronger delipidation activity. Involved in phagophore growth during mitophagy independently of its protease activity and of ATG8 proteins: acts by regulating ATG9A trafficking to mitochondria and promoting phagophore-endoplasmic reticulum contacts during the lipid transfer phase of mitophagy. The polypeptide is Cysteine protease ATG4A (Homo sapiens (Human)).